Here is a 205-residue protein sequence, read N- to C-terminus: Holliday junction branch migration complex subunit RuvA (205 aa).

The domain I stretch occupies residues methionine 1–isoleucine 64. Positions threonine 65 to glutamate 143 are domain II. The segment at arginine 144 to proline 156 is flexible linker. The tract at residues valine 157–leucine 205 is domain III.

It belongs to the RuvA family. In terms of assembly, homotetramer. Forms an RuvA(8)-RuvB(12)-Holliday junction (HJ) complex. HJ DNA is sandwiched between 2 RuvA tetramers; dsDNA enters through RuvA and exits via RuvB. An RuvB hexamer assembles on each DNA strand where it exits the tetramer. Each RuvB hexamer is contacted by two RuvA subunits (via domain III) on 2 adjacent RuvB subunits; this complex drives branch migration. In the full resolvosome a probable DNA-RuvA(4)-RuvB(12)-RuvC(2) complex forms which resolves the HJ.

It is found in the cytoplasm. Functionally, the RuvA-RuvB-RuvC complex processes Holliday junction (HJ) DNA during genetic recombination and DNA repair, while the RuvA-RuvB complex plays an important role in the rescue of blocked DNA replication forks via replication fork reversal (RFR). RuvA specifically binds to HJ cruciform DNA, conferring on it an open structure. The RuvB hexamer acts as an ATP-dependent pump, pulling dsDNA into and through the RuvAB complex. HJ branch migration allows RuvC to scan DNA until it finds its consensus sequence, where it cleaves and resolves the cruciform DNA. This chain is Holliday junction branch migration complex subunit RuvA, found in Shewanella loihica (strain ATCC BAA-1088 / PV-4).